A 638-amino-acid polypeptide reads, in one-letter code: Neuroendocrine convertase 2 (638 aa).

Residues 1-25 (MKGGCVSQWKAAAGLLFCVTVFASA) form the signal peptide. A propeptide spanning residues 26–109 (ERPVFTNHFL…QQEGFDRKKR (84 aa)) is cleaved from the precursor. In terms of domain architecture, Peptidase S8 spans 129 to 453 (QWYLINTGQA…YGVLDAGAMV (325 aa)). Catalysis depends on charge relay system residues Asp167 and His208. Cystine bridges form between Cys225-Cys376 and Cys317-Cys347. Asn375 is a glycosylation site (N-linked (GlcNAc...) asparagine). The active-site Charge relay system is the Ser384. In terms of domain architecture, P/Homo B spans 461 to 597 (TVPERFHCVG…TLMLHGSQSA (137 aa)). The cysteines at positions 468 and 494 are disulfide-linked. Residues Asn514 and Asn524 are each glycosylated (N-linked (GlcNAc...) asparagine).

It belongs to the peptidase S8 family. Furin subfamily.

Its subcellular location is the cytoplasmic vesicle. The protein localises to the secretory vesicle. The protein resides in the secreted. The enzyme catalyses Release of protein hormones and neuropeptides from their precursors, generally by hydrolysis of -Lys-Arg-|- bonds.. Functionally, serine endopeptidase which is involved in the processing of hormone and other protein precursors at sites comprised of pairs of basic amino acid residues. Responsible for the release of glucagon from proglucagon in pancreatic A cells. This Sus scrofa (Pig) protein is Neuroendocrine convertase 2 (PCSK2).